We begin with the raw amino-acid sequence, 623 residues long: Riboflavin biosynthesis protein PYRR, chloroplastic (623 aa).

A chloroplast-targeting transit peptide spans 1-45 (MPLPQPLLGGASPAPARAASSFLHPLLHTRHRVSTAPAAASSFVP). Positions 52-181 (ANDAMLLRRA…ALRNEGIQVD (130 aa)) constitute a CMP/dCMP-type deaminase domain.

This sequence in the C-terminal section; belongs to the YbiA family.

The protein resides in the plastid. The protein localises to the chloroplast. It carries out the reaction 5-amino-6-(5-phospho-D-ribitylamino)uracil + NADP(+) = 5-amino-6-(5-phospho-D-ribosylamino)uracil + NADPH + H(+). It catalyses the reaction 2,5-diamino-6-hydroxy-4-(5-phosphoribosylamino)-pyrimidine + H2O = 2,5,6-triamino-4-hydroxypyrimidine + D-ribose 5-phosphate. The catalysed reaction is 5-amino-6-(5-phospho-D-ribosylamino)uracil + H2O = 5,6-diaminouracil + D-ribose 5-phosphate. It participates in cofactor biosynthesis; riboflavin biosynthesis; 5-amino-6-(D-ribitylamino)uracil from GTP: step 3/4. Pyrimidine reductase involved in the riboflavin biosynthesis pathway. Also has a non-functional N-terminal deaminase domain that lacks the catalytically essential zinc-binding residues. 39% activity when NADH replaces NADPH. No evidence for a phosphatase activity conferred by the N-terminal domain. Functionally, catalyzes the hydrolysis of the N-glycosidic bond in the first two intermediates of riboflavin biosynthesis, which are highly reactive metabolites, yielding relatively innocuous products. Thus, can divert a surplus of harmful intermediates into relatively harmless products and pre-empt the damage these intermediates would otherwise do. Has no activity against GTP, nucleoside monophosphates or ADP-ribose. The polypeptide is Riboflavin biosynthesis protein PYRR, chloroplastic (PYRR) (Zea mays (Maize)).